A 114-amino-acid chain; its full sequence is Histone H3-7 (114 aa).

Residues Asn1 to Lys17 are compositionally biased toward basic residues. Residues Asn1–His32 are disordered. Residues Lys18–Val28 are compositionally biased toward low complexity.

It belongs to the histone H3 family. In terms of assembly, the nucleosome is a histone octamer containing two molecules each of H2A, H2B, H3 and H4 assembled in one H3-H4 heterotetramer and two H2A-H2B heterodimers. The octamer wraps approximately 147 bp of DNA.

Its subcellular location is the nucleus. The protein resides in the chromosome. Functionally, core component of nucleosome. Nucleosomes wrap and compact DNA into chromatin, limiting DNA accessibility to the cellular machineries which require DNA as a template. Histones thereby play a central role in transcription regulation, DNA repair, DNA replication and chromosomal stability. DNA accessibility is regulated via a complex set of post-translational modifications of histones, also called histone code, and nucleosome remodeling. The protein is Histone H3-7 (H3-7) of Stylonychia lemnae (Ciliate).